A 521-amino-acid polypeptide reads, in one-letter code: Bifunctional purine biosynthesis protein PurH (521 aa).

The MGS-like domain maps to 1–145; it reads MIKQALISVS…KNHRDVTVIV (145 aa).

This sequence belongs to the PurH family.

The catalysed reaction is (6R)-10-formyltetrahydrofolate + 5-amino-1-(5-phospho-beta-D-ribosyl)imidazole-4-carboxamide = 5-formamido-1-(5-phospho-D-ribosyl)imidazole-4-carboxamide + (6S)-5,6,7,8-tetrahydrofolate. The enzyme catalyses IMP + H2O = 5-formamido-1-(5-phospho-D-ribosyl)imidazole-4-carboxamide. It functions in the pathway purine metabolism; IMP biosynthesis via de novo pathway; 5-formamido-1-(5-phospho-D-ribosyl)imidazole-4-carboxamide from 5-amino-1-(5-phospho-D-ribosyl)imidazole-4-carboxamide (10-formyl THF route): step 1/1. It participates in purine metabolism; IMP biosynthesis via de novo pathway; IMP from 5-formamido-1-(5-phospho-D-ribosyl)imidazole-4-carboxamide: step 1/1. The sequence is that of Bifunctional purine biosynthesis protein PurH from Burkholderia multivorans (strain ATCC 17616 / 249).